A 337-amino-acid chain; its full sequence is Trace amine-associated receptor 5 (337 aa).

Topologically, residues 1 to 38 are extracellular; the sequence is MRAVLLPGSGEQPAAFCYQVNGSCPRTVHPLAIRVLIY. N-linked (GlcNAc...) asparagine glycosylation is present at N21. 2 disulfides stabilise this stretch: C24–C188 and C99–C192. The helical transmembrane segment at 39–59 threads the bilayer; sequence LACAVGMLITVLGNLFVVFAV. Over 60–70 the chain is Cytoplasmic; sequence SYFKVLHTPTN. A helical transmembrane segment spans residues 71–91; sequence FLLLSLALADMLLGLLVLPLS. Over 92 to 109 the chain is Extracellular; the sequence is TVRSVESCWFFGDFLCRL. The helical transmembrane segment at 110–130 threads the bilayer; that stretch reads HTYLDTLFCLTSIFHLCFISI. The Cytoplasmic segment spans residues 131–154; it reads DRHCAICDPLLYPSKFTVRIALRY. A helical transmembrane segment spans residues 155–175; sequence IAAGWGIPAAYTAFFLYTDVV. The interval 176 to 189 is extracellular Loop 2 (ECL2); the sequence is ERALSQWLEEMPCV. The Extracellular portion of the chain corresponds to 176 to 204; sequence ERALSQWLEEMPCVGSCQLLFNKFWGWLN. The helical transmembrane segment at 205-225 threads the bilayer; it reads FPAFFIPCLIMISLYLKIFVV. Residues 226-253 lie on the Cytoplasmic side of the membrane; that stretch reads ATRQAQQIRTLSQSLSGAVKRERKAAKT. Residues 254–274 traverse the membrane as a helical segment; sequence LGIAVGIYLVCWLPFTVDTLV. The Extracellular segment spans residues 275–284; sequence DSLLNFVTPP. Residues 285–307 form a helical membrane-spanning segment; it reads LVFDIFIWFAYFNSACNPIIYVF. Residues 308–337 lie on the Cytoplasmic side of the membrane; it reads SYRWFRKALKLLLSREILSPRTQTADLFHD.

Belongs to the G-protein coupled receptor 1 family.

The protein resides in the cell membrane. Functionally, olfactory receptor specific for trimethylamine, a trace amine enriched in the urine of male rats, playing a role in social behavior. Also activated by N-methylpiperidine. Trimethylamine is present at high concentration in the urine of male after puberty and acts as an attractant. Trimethylamine-binding causes a conformation change that triggers signaling via G(s)-class of G alpha proteins (GNAL or GNAS). Also required to provide olfactory input into limbic brain areas to regulate emotional behaviors likely via modulation of the serotonin system. The chain is Trace amine-associated receptor 5 from Rattus norvegicus (Rat).